Consider the following 366-residue polypeptide: Alcohol dehydrogenase (366 aa).

Residues Cys41, His62, Glu63, and Asp167 each contribute to the Zn(2+) site.

Belongs to the zinc-containing alcohol dehydrogenase family. Homotetramer. Zn(2+) serves as cofactor.

The enzyme catalyses a primary alcohol + NAD(+) = an aldehyde + NADH + H(+). It catalyses the reaction a secondary alcohol + NAD(+) = a ketone + NADH + H(+). It carries out the reaction (R,R)-butane-2,3-diol + NAD(+) = (R)-acetoin + NADH + H(+). The catalysed reaction is an aldehyde + NAD(+) + H2O = a carboxylate + NADH + 2 H(+). Its function is as follows. Multifunctional alcohol dehydrogenase exhibiting NAD(+)-dependent dehydrogenase activities for 2,3-butanediol, ethanol and acetaldehyde, and reductase activities for acetoin (NADH-dependent), and diacetyl and acetaldehyde (independently of whether NADH or NADPH is the reductant). The rate of oxidation of 2,3-butanediol is much higher than for the oxidation of ethanol. Has acetaldehyde dehydrogenase activity leading to acetate formation. May function in the release of excess reducing power in the absence of exogenous hydrogen acceptors such as oxygen. In Cupriavidus necator (strain ATCC 17699 / DSM 428 / KCTC 22496 / NCIMB 10442 / H16 / Stanier 337) (Ralstonia eutropha), this protein is Alcohol dehydrogenase (adh).